A 102-amino-acid polypeptide reads, in one-letter code: Large ribosomal subunit protein bL21 (102 aa).

The protein belongs to the bacterial ribosomal protein bL21 family. As to quaternary structure, part of the 50S ribosomal subunit. Contacts protein L20.

Functionally, this protein binds to 23S rRNA in the presence of protein L20. In Listeria monocytogenes serotype 4b (strain F2365), this protein is Large ribosomal subunit protein bL21.